The following is a 376-amino-acid chain: Beta sliding clamp (376 aa).

This sequence belongs to the beta sliding clamp family. In terms of assembly, forms a ring-shaped head-to-tail homodimer around DNA which binds and tethers DNA polymerases and other proteins to the DNA. The DNA replisome complex has a single clamp-loading complex (3 tau and 1 each of delta, delta', psi and chi subunits) which binds 3 Pol III cores (1 core on the leading strand and 2 on the lagging strand) each with a beta sliding clamp dimer. Additional proteins in the replisome are other copies of gamma, psi and chi, Ssb, DNA helicase and RNA primase.

Its subcellular location is the cytoplasm. Functionally, confers DNA tethering and processivity to DNA polymerases and other proteins. Acts as a clamp, forming a ring around DNA (a reaction catalyzed by the clamp-loading complex) which diffuses in an ATP-independent manner freely and bidirectionally along dsDNA. Initially characterized for its ability to contact the catalytic subunit of DNA polymerase III (Pol III), a complex, multichain enzyme responsible for most of the replicative synthesis in bacteria; Pol III exhibits 3'-5' exonuclease proofreading activity. The beta chain is required for initiation of replication as well as for processivity of DNA replication. This is Beta sliding clamp (dnaN) from Streptomyces coelicolor (strain ATCC BAA-471 / A3(2) / M145).